A 30-amino-acid chain; its full sequence is Varv peptide H (30 aa).

Positions 1-30 (GLPVCGETCFGGTCNTPGCSCETWPVCSRN) form a cross-link, cyclopeptide (Gly-Asn). Intrachain disulfides connect cysteine 5–cysteine 19, cysteine 9–cysteine 21, and cysteine 14–cysteine 27.

This is a cyclic peptide.

Functionally, probably participates in a plant defense mechanism. The polypeptide is Varv peptide H (Viola arvensis (European field pansy)).